Reading from the N-terminus, the 369-residue chain is tRNA-specific 2-thiouridylase MnmA (369 aa).

Residues 11–18 and methionine 37 contribute to the ATP site; that span reads GMSGGVDS. The interaction with target base in tRNA stretch occupies residues 97-99; sequence NPD. The active-site Nucleophile is the cysteine 102. Cysteine 102 and cysteine 199 form a disulfide bridge. Glycine 127 lines the ATP pocket. Positions 149 to 151 are interaction with tRNA; that stretch reads KDQ. The active-site Cysteine persulfide intermediate is cysteine 199. The interval 311-312 is interaction with tRNA; the sequence is RY.

Belongs to the MnmA/TRMU family. As to quaternary structure, interacts with TusE.

Its subcellular location is the cytoplasm. It catalyses the reaction S-sulfanyl-L-cysteinyl-[protein] + uridine(34) in tRNA + AH2 + ATP = 2-thiouridine(34) in tRNA + L-cysteinyl-[protein] + A + AMP + diphosphate + H(+). In terms of biological role, catalyzes the 2-thiolation of uridine at the wobble position (U34) of tRNA(Lys), tRNA(Glu) and tRNA(Gln), leading to the formation of s(2)U34, the first step of tRNA-mnm(5)s(2)U34 synthesis. Sulfur is provided by IscS, via a sulfur-relay system. Binds ATP and its substrate tRNAs. The sequence is that of tRNA-specific 2-thiouridylase MnmA from Enterobacter sp. (strain 638).